A 1686-amino-acid polypeptide reads, in one-letter code: Thrombospondin type-1 domain-containing protein 7A (1686 aa).

Positions 1–36 (MGLASRAPGKGGTSAGALASLFRVALLFFGLWDVQT) are cleaved as a signal peptide. Topologically, residues 37 to 1635 (QTVANTRPTY…FGPDGKLKTW (1599 aa)) are extracellular. TSP type-1 domains are found at residues 44–103 (PTYI…RVCD), 107–181 (ELYD…IPCP), and 183–236 (DCVV…GKCE). Asn-223 carries N-linked (GlcNAc...) asparagine glycosylation. The disordered stretch occupies residues 257–321 (IRQARDTGEA…EKKRMRDPET (65 aa)). Composition is skewed to basic and acidic residues over residues 259-272 (QARD…PKAE) and 294-321 (EKKE…DPET). 16 consecutive TSP type-1 domains span residues 385–441 (DCEV…SPQG), 448–535 (VVYN…IPCP), 537–596 (ECEV…PSCY), 656–717 (DCVL…HPCT), 718–797 (VYHW…LPCK), 799–859 (DCVV…SVCP), 860–932 (GYRW…LPCQ), 934–985 (DCQL…QYCP), 988–1061 (KYNA…IPCP), 1063–1123 (DCKL…SDCS), 1124–1191 (QYVW…LPCP), 1193–1247 (DCVL…SNCF), 1248–1311 (HYSY…VECP), 1313–1368 (NCQL…KPCF), 1369–1439 (SWRY…VPCP), and 1441–1502 (ECYL…GQCY). Disulfide bonds link Cys-460-Cys-530, Cys-480-Cys-534, and Cys-491-Cys-519. Asn-475 carries an N-linked (GlcNAc...) asparagine glycan. Asn-525 is a glycosylation site (N-linked (GlcNAc...) asparagine). 2 cysteine pairs are disulfide-bonded: Cys-657/Cys-699 and Cys-668/Cys-672. N-linked (GlcNAc...) asparagine glycosylation occurs at Asn-701. Intrachain disulfides connect Cys-711–Cys-716, Cys-729–Cys-792, Cys-756–Cys-796, Cys-767–Cys-780, Cys-800–Cys-842, Cys-811–Cys-815, and Cys-852–Cys-858. Asn-739 carries N-linked (GlcNAc...) asparagine glycosylation. The N-linked (GlcNAc...) asparagine glycan is linked to Asn-996. Cystine bridges form between Cys-1000–Cys-1056, Cys-1022–Cys-1060, Cys-1033–Cys-1046, Cys-1064–Cys-1101, Cys-1075–Cys-1079, and Cys-1118–Cys-1122. The N-linked (GlcNAc...) asparagine glycan is linked to Asn-1071. Asn-1212 is a glycosylation site (N-linked (GlcNAc...) asparagine). Cys-1240 and Cys-1246 form a disulfide bridge. The N-linked (GlcNAc...) asparagine glycan is linked to Asn-1252. Intrachain disulfides connect Cys-1259–Cys-1306, Cys-1267–Cys-1310, Cys-1278–Cys-1291, Cys-1314–Cys-1352, Cys-1325–Cys-1329, Cys-1362–Cys-1367, Cys-1378–Cys-1434, Cys-1385–Cys-1438, Cys-1396–Cys-1415, Cys-1442–Cys-1486, Cys-1453–Cys-1457, and Cys-1496–Cys-1501. Asn-1303 carries N-linked (GlcNAc...) asparagine glycosylation. Residue Asn-1393 is glycosylated (N-linked (GlcNAc...) asparagine). Residue Asn-1527 is glycosylated (N-linked (GlcNAc...) asparagine). The helical transmembrane segment at 1636–1656 (VYGVAAGAFVLLVFIVSMTYL) threads the bilayer. At 1657-1686 (ACKKPKKPQRRQMNNRLKPLTLAYDGDADM) the chain is on the cytoplasmic side.

Post-translationally, extensively N-glycosylated.

The protein resides in the cell membrane. The protein localises to the cell projection. Functionally, required for normal sprouting angiogenesis and normal embryonic development of intersegmental vessels (ISV). Required for normal function of the glomerular filtration barrier. Required for normal axon outgrowth on embryonic motor neurons at the level of the horizontal myoseptum. Required for normal expression of notch1b, suggesting that its functions in angiogenesis and neuron outgrowth are due to decreased expression of notch1b. Plays a role in actin cytoskeleton rearrangement. In Danio rerio (Zebrafish), this protein is Thrombospondin type-1 domain-containing protein 7A.